The sequence spans 260 residues: Neuraminyllactose-binding hemagglutinin (260 aa).

Positions 1-27 (MKTNGHFKDFAWKKCFLGASVVALLVG) are cleaved as a signal peptide. The N-palmitoyl cysteine moiety is linked to residue C28. Residue C28 is the site of S-diacylglycerol cysteine attachment.

Its subcellular location is the cell outer membrane. The polypeptide is Neuraminyllactose-binding hemagglutinin (hpaA) (Helicobacter pylori (strain J99 / ATCC 700824) (Campylobacter pylori J99)).